A 218-amino-acid polypeptide reads, in one-letter code: Thiopurine S-methyltransferase (218 aa).

Residues Trp10, Leu45, Glu66, and Arg123 each contribute to the S-adenosyl-L-methionine site.

It belongs to the class I-like SAM-binding methyltransferase superfamily. TPMT family.

It localises to the cytoplasm. The catalysed reaction is S-adenosyl-L-methionine + a thiopurine = S-adenosyl-L-homocysteine + a thiopurine S-methylether.. The sequence is that of Thiopurine S-methyltransferase from Shewanella denitrificans (strain OS217 / ATCC BAA-1090 / DSM 15013).